Here is a 175-residue protein sequence, read N- to C-terminus: Adenine phosphoribosyltransferase (175 aa).

The protein belongs to the purine/pyrimidine phosphoribosyltransferase family. In terms of assembly, homodimer.

The protein localises to the cytoplasm. It catalyses the reaction AMP + diphosphate = 5-phospho-alpha-D-ribose 1-diphosphate + adenine. It participates in purine metabolism; AMP biosynthesis via salvage pathway; AMP from adenine: step 1/1. In terms of biological role, catalyzes a salvage reaction resulting in the formation of AMP, that is energically less costly than de novo synthesis. The polypeptide is Adenine phosphoribosyltransferase (Nitrosospira multiformis (strain ATCC 25196 / NCIMB 11849 / C 71)).